Reading from the N-terminus, the 227-residue chain is UPF0173 metal-dependent hydrolase Oter_4201 (227 aa).

This sequence belongs to the UPF0173 family.

The chain is UPF0173 metal-dependent hydrolase Oter_4201 from Opitutus terrae (strain DSM 11246 / JCM 15787 / PB90-1).